Reading from the N-terminus, the 521-residue chain is Acetylcholine receptor subunit delta (521 aa).

Positions 1–21 (MAWIWISLLLPILIYFPGCFS) are cleaved as a signal peptide. The Extracellular portion of the chain corresponds to 22 to 247 (ESEEERLLNH…ITFYLIIERK (226 aa)). N-linked (GlcNAc...) asparagine glycans are attached at residues Asn-53 and Asn-164. Cys-151 and Cys-165 are disulfide-bonded. Transmembrane regions (helical) follow at residues 248–272 (PLFY…VFYL), 280–297 (MTLA…LLLI), and 314–335 (YLMF…VLNL). Topologically, residues 336 to 475 (HFRTPSTHAI…WYRIARTVDR (140 aa)) are cytoplasmic. Residue Tyr-394 is modified to Phosphotyrosine; by Tyr-kinases. The helical transmembrane segment at 476 to 494 (LCLFLVTPVMIIGTLWIFL) threads the bilayer.

The protein belongs to the ligand-gated ion channel (TC 1.A.9) family. Acetylcholine receptor (TC 1.A.9.1) subfamily. In terms of assembly, pentamer of two alpha chains, and one each of the beta, delta, and gamma (in immature muscle) or epsilon (in mature muscle) chains.

The protein localises to the postsynaptic cell membrane. Its subcellular location is the cell membrane. It catalyses the reaction K(+)(in) = K(+)(out). The enzyme catalyses Na(+)(in) = Na(+)(out). In terms of biological role, after binding acetylcholine, the AChR responds by an extensive change in conformation that affects all subunits and leads to opening of an ion-conducting channel across the plasma membrane. This is Acetylcholine receptor subunit delta (chrnd) from Xenopus laevis (African clawed frog).